The chain runs to 123 residues: Protein LLP homolog (123 aa).

Residues 1–21 (MAKSIRSKWKRKMRAEKRKKN) are compositionally biased toward basic residues. Disordered regions lie at residues 1 to 23 (MAKS…KNAP) and 55 to 123 (KINE…KLAW). Basic and acidic residues predominate over residues 70–89 (DSSKMDMELKRNKKNLRDQH). Basic residues predominate over residues 100 to 123 (QQKKLKSQCGKKKGKSKQAKKLAW).

The protein belongs to the learning-associated protein family.

Its subcellular location is the nucleus. The protein localises to the nucleolus. The protein resides in the chromosome. Its function is as follows. Regulates dendritic and spine growth and synaptic transmission. This Xenopus tropicalis (Western clawed frog) protein is Protein LLP homolog (llph).